The primary structure comprises 51 residues: Sperm protamine P1 (51 aa).

It belongs to the protamine P1 family. Testis.

It is found in the nucleus. It localises to the chromosome. Functionally, protamines substitute for histones in the chromatin of sperm during the haploid phase of spermatogenesis. They compact sperm DNA into a highly condensed, stable and inactive complex. In Colobus guereza (Mantled guereza), this protein is Sperm protamine P1 (PRM1).